The chain runs to 518 residues: Major facilitator superfamily domain-containing protein 8 (518 aa).

The interval 1 to 20 (MAGLRNESEQEPLLGDTPGS) is disordered. Topologically, residues 1–40 (MAGLRNESEQEPLLGDTPGSREWDILETEEHYKSRWRSIR) are cytoplasmic. Residues 13-14 (LL) carry the Dileucine internalization motif motif. Residues 41–61 (ILYLTMFLSSVGFSVVMMSIW) traverse the membrane as a helical segment. At 62–74 (PYLQKIDPTADTS) the chain is on the extracellular side. A helical transmembrane segment spans residues 75-95 (FLGWVIASYSLGQMVASPIFG). The Cytoplasmic portion of the chain corresponds to 96–105 (LWSNYRPRKE). A helical transmembrane segment spans residues 106 to 126 (PLIVSILISVAANCLYAYLHI). Residues 127 to 131 (PASHN) are Extracellular-facing. The helical transmembrane segment at 132 to 152 (KYYMLVARGLLGIGAGNVAVV) threads the bilayer. Residues 153–173 (RSYTAGATSLQERTSSMANIS) are Cytoplasmic-facing. Residues 174–194 (MCQALGFILGPVFQTCFTFLG) traverse the membrane as a helical segment. The Extracellular portion of the chain corresponds to 195-211 (EKGVTWDVIKLQINMYT). A helical membrane pass occupies residues 212–232 (TPVLLSAFLGILNIILILAIL). The Cytoplasmic portion of the chain corresponds to 233-266 (REHRVDDSGRQCKSINFEEASTDEAQVPQGNIDQ). Residues 267–287 (VAVVAINVLFFVTLFIFALFE) form a helical membrane-spanning segment. Residues 288–304 (TIITPLTMDMYAWTQEQ) lie on the Extracellular side of the membrane. A helical membrane pass occupies residues 305–325 (AVLYNGIILAALGVEAVVIFL). Residues 326–337 (GVKLLSKKIGER) lie on the Cytoplasmic side of the membrane. A helical transmembrane segment spans residues 338-358 (AILLGGLIVVWVGFFILLPWG). The Extracellular portion of the chain corresponds to 359–412 (NQFPKIQWEDLHNNSIPNTTFGEIIIGLWKSPMEDDNERPTGCSIEQAWCLYTP). N-linked (GlcNAc...) asparagine glycosylation is found at Asn-371 and Asn-376. Residues 413-433 (VIHLAQFLTSAVLIGLGYPVC) form a helical membrane-spanning segment. Residues 434-451 (NLMSYTLYSKILGPKPQG) lie on the Cytoplasmic side of the membrane. The chain crosses the membrane as a helical span at residues 452–472 (VYMGWLTASGSGARILGPMFI). Residues 473 to 482 (SQVYAHWGPR) lie on the Extracellular side of the membrane. The chain crosses the membrane as a helical span at residues 483-503 (WAFSLVCGIIVLTITLLGVVY). The Cytoplasmic portion of the chain corresponds to 504 to 518 (KRLIALSVRYGRIQE).

Belongs to the major facilitator superfamily. Expressed at very low levels in all tissues tested.

It is found in the endosome membrane. Its subcellular location is the lysosome membrane. It catalyses the reaction chloride(in) = chloride(out). It carries out the reaction iodide(out) = iodide(in). The enzyme catalyses fluoride(in) = fluoride(out). Its activity is regulated as follows. Inhibited by chloride channel blockers 4,4'-diisothiocyano-2,2'-stilbenedisulfonate (DIDS), niflumic acid (NFA), and 5-Nitro-2-(3-phenylpropylamino) benzoic acid (NPPB). Its function is as follows. Outward-rectifying chloride channel involved in endolysosomal chloride homeostasis, membrane fusion and function. Conducts chloride currents up to hundreds of picoamperes. Regulates lysosomal calcium content by reducing the lysosomal membrane potential, thereby activating TRPML1 channel and further release of lysosomal calcium ions. Regulates the pH in endolysosomal compartments and may contribute to progressive acidification from endosome to lysosome. Permeable to other halides such as iodide and fluoride ions. The chain is Major facilitator superfamily domain-containing protein 8 from Homo sapiens (Human).